The primary structure comprises 191 residues: Fe/S biogenesis protein NfuA (191 aa).

The [4Fe-4S] cluster site is built by cysteine 149 and cysteine 152.

The protein belongs to the NfuA family. Homodimer. It depends on [4Fe-4S] cluster as a cofactor.

Its function is as follows. Involved in iron-sulfur cluster biogenesis. Binds a 4Fe-4S cluster, can transfer this cluster to apoproteins, and thereby intervenes in the maturation of Fe/S proteins. Could also act as a scaffold/chaperone for damaged Fe/S proteins. This is Fe/S biogenesis protein NfuA from Hamiltonella defensa subsp. Acyrthosiphon pisum (strain 5AT).